The following is a 189-amino-acid chain: Potassium-transporting ATPase KdpC subunit (189 aa).

A helical membrane pass occupies residues 5–25 (LLPALTMLLVFTVITGIVYPL).

The protein belongs to the KdpC family. In terms of assembly, the system is composed of three essential subunits: KdpA, KdpB and KdpC.

Its subcellular location is the cell membrane. Part of the high-affinity ATP-driven potassium transport (or Kdp) system, which catalyzes the hydrolysis of ATP coupled with the electrogenic transport of potassium into the cytoplasm. This subunit acts as a catalytic chaperone that increases the ATP-binding affinity of the ATP-hydrolyzing subunit KdpB by the formation of a transient KdpB/KdpC/ATP ternary complex. This Mycobacterium bovis (strain ATCC BAA-935 / AF2122/97) protein is Potassium-transporting ATPase KdpC subunit.